Consider the following 246-residue polypeptide: Probable phosphatase PBPRB2022 (246 aa).

The Zn(2+) site is built by His-8, His-10, His-16, His-41, Glu-74, His-102, His-132, Asp-193, and His-195.

This sequence belongs to the PHP family. The cofactor is Zn(2+).

This Photobacterium profundum (strain SS9) protein is Probable phosphatase PBPRB2022.